The following is a 612-amino-acid chain: Bifunctional 6(G)-fructosyltransferase/2,1-fructan:2,1-fructan 1-fructosyltransferase (612 aa).

Topologically, residues 1–24 are cytoplasmic; the sequence is MDAQDIESRHPLIGARPRRRALRS. A helical; Signal-anchor for type II membrane protein transmembrane segment spans residues 25-45; the sequence is LSILLAAALLLGLVLFYANGT. Over 46 to 612 the chain is Vacuolar; the sequence is GSGTAVDPVR…NSTYNDFYHF (567 aa). Residues 82 to 85, Q101, and W109 contribute to the substrate site; that span reads YMND. D85 is a catalytic residue. An N-linked (GlcNAc...) asparagine glycan is attached at N111. Substrate-binding positions include 144-145 and 208-209; these read WT and RD. Residues N216 and N230 are each glycosylated (N-linked (GlcNAc...) asparagine). E267 contributes to the substrate binding site. N465 carries an N-linked (GlcNAc...) asparagine glycan. A disulfide bridge connects residues C466 and C514. 2 N-linked (GlcNAc...) asparagine glycosylation sites follow: N586 and N603.

It belongs to the glycosyl hydrolase 32 family. Post-translationally, might be processed in two N-terminal and C-terminal proteolytic fragments.

Its subcellular location is the vacuole membrane. The enzyme catalyses [1-beta-D-fructofuranosyl-(2-&gt;1)-]m+1 alpha-D-glucopyranoside + [1-beta-D-fructofuranosyl-(2-&gt;1)-]n+1 alpha-D-glucopyranoside = [1-beta-D-fructofuranosyl-(2-&gt;1)-]m alpha-D-glucopyranoside + [1-beta-D-fructofuranosyl-(2-&gt;1)-]n+1 beta-D-fructofuranosyl-(2-&gt;6)-alpha-D-glucopyranoside (m &gt; 0, n &gt;= 0).. It carries out the reaction [beta-D-fructosyl-(2-&gt;1)-]m + [beta-D-fructosyl-(2-&gt;1)-]n = [beta-D-fructosyl-(2-&gt;1)-]m-1 + [beta-D-fructosyl-(2-&gt;1)-]n+1.. Involved in the synthesis of fructan of the inulin neoseries. Catalyzes a self-transfer between identical oligosaccharides of the 1-kestose series. The chain is Bifunctional 6(G)-fructosyltransferase/2,1-fructan:2,1-fructan 1-fructosyltransferase from Allium cepa (Onion).